The sequence spans 328 residues: GTP 3',8-cyclase (328 aa).

Residues 1–229 (MNQVDYLRIS…DAQVRGAGPA (229 aa)) form the Radical SAM core domain. Residue arginine 8 coordinates GTP. Residues cysteine 15 and cysteine 19 each contribute to the [4Fe-4S] cluster site. An S-adenosyl-L-methionine-binding site is contributed by tyrosine 21. Position 22 (cysteine 22) interacts with [4Fe-4S] cluster. Arginine 60 is a binding site for GTP. Residue glycine 64 participates in S-adenosyl-L-methionine binding. Threonine 91 serves as a coordination point for GTP. S-adenosyl-L-methionine is bound at residue serine 115. Lysine 155 contacts GTP. S-adenosyl-L-methionine is bound at residue methionine 189. Cysteine 252 and cysteine 255 together coordinate [4Fe-4S] cluster. 257-259 (RMR) contacts GTP. [4Fe-4S] cluster is bound at residue cysteine 269.

This sequence belongs to the radical SAM superfamily. MoaA family. As to quaternary structure, monomer and homodimer. It depends on [4Fe-4S] cluster as a cofactor.

It catalyses the reaction GTP + AH2 + S-adenosyl-L-methionine = (8S)-3',8-cyclo-7,8-dihydroguanosine 5'-triphosphate + 5'-deoxyadenosine + L-methionine + A + H(+). Its pathway is cofactor biosynthesis; molybdopterin biosynthesis. Its function is as follows. Catalyzes the cyclization of GTP to (8S)-3',8-cyclo-7,8-dihydroguanosine 5'-triphosphate. This Nostoc sp. (strain PCC 7120 / SAG 25.82 / UTEX 2576) protein is GTP 3',8-cyclase.